A 141-amino-acid polypeptide reads, in one-letter code: Large ribosomal subunit protein uL16 (141 aa).

Belongs to the universal ribosomal protein uL16 family. Part of the 50S ribosomal subunit.

In terms of biological role, binds 23S rRNA and is also seen to make contacts with the A and possibly P site tRNAs. This is Large ribosomal subunit protein uL16 from Campylobacter fetus subsp. fetus (strain 82-40).